A 111-amino-acid polypeptide reads, in one-letter code: Cytochrome c6-like (111 aa).

The signal sequence occupies residues 1–25; sequence MQKFLKLVLVTFLFLISTLTPPANA. Heme c contacts are provided by cysteine 39, cysteine 42, histidine 43, and methionine 83.

The protein belongs to the cytochrome c family. PetJ subfamily. Post-translationally, binds 1 heme c group covalently per subunit.

It is found in the cellular thylakoid lumen. This chain is Cytochrome c6-like, found in Nostoc sp. (strain PCC 7120 / SAG 25.82 / UTEX 2576).